A 64-amino-acid chain; its full sequence is Large ribosomal subunit protein bL35 (64 aa).

Residues 1-17 (MKQKTHSGIKKRIKKTG) are compositionally biased toward basic residues. The segment at 1 to 64 (MKQKTHSGIK…KRVNRLLGEG (64 aa)) is disordered. Positions 21 to 33 (LRREQANRRHLLE) are enriched in basic and acidic residues.

The protein belongs to the bacterial ribosomal protein bL35 family.

The chain is Large ribosomal subunit protein bL35 from Corynebacterium kroppenstedtii (strain DSM 44385 / JCM 11950 / CIP 105744 / CCUG 35717).